Consider the following 457-residue polypeptide: Sensor protein CpxA (457 aa).

At 1 to 7 the chain is on the cytoplasmic side; the sequence is MIGSLTA. A helical transmembrane segment spans residues 8 to 29; that stretch reads RIFAIFWLTLALVLMLVLMLPK. Topologically, residues 30 to 163 are periplasmic; that stretch reads LDSRQMTELL…SDFINLLFDR (134 aa). The helical transmembrane segment at 164-184 threads the bilayer; that stretch reads PLLLLIVTMLVSTPLLLWLAW. Residues 185-237 enclose the HAMP domain; the sequence is SLAKPARKLKNAADEVAQGNLRQHPELEAGPQEFLAAGASFNQMVTALERMMT. Residues 185-457 are Cytoplasmic-facing; that stretch reads SLAKPARKLK…VIWLPLYKRS (273 aa). Residues 245–455 form the Histidine kinase domain; that stretch reads DISHELRTPL…RLVIWLPLYK (211 aa). H248 carries the phosphohistidine; by autocatalysis modification.

The protein localises to the cell inner membrane. It catalyses the reaction ATP + protein L-histidine = ADP + protein N-phospho-L-histidine.. In terms of biological role, this protein is involved in several diverse cellular processes, such as the functioning of acetohydroxyacid synthetase I, in the biosynthesis of isoleucine and valine, the TraJ protein activation activity for tra gene expression in F plasmid, and the synthesis, translocation, or stability of cell envelope proteins. Activates CpxR by phosphorylation. In Escherichia coli O157:H7, this protein is Sensor protein CpxA (cpxA).